We begin with the raw amino-acid sequence, 120 residues long: NAD(P)H-quinone oxidoreductase subunit 3, chloroplastic (120 aa).

Helical transmembrane passes span 9-29 (IFWA…FISG), 64-84 (MFAL…PWAM), and 88-108 (VLGV…IVGL).

This sequence belongs to the complex I subunit 3 family. As to quaternary structure, NDH is composed of at least 16 different subunits, 5 of which are encoded in the nucleus.

Its subcellular location is the plastid. The protein localises to the chloroplast thylakoid membrane. The enzyme catalyses a plastoquinone + NADH + (n+1) H(+)(in) = a plastoquinol + NAD(+) + n H(+)(out). It carries out the reaction a plastoquinone + NADPH + (n+1) H(+)(in) = a plastoquinol + NADP(+) + n H(+)(out). Functionally, NDH shuttles electrons from NAD(P)H:plastoquinone, via FMN and iron-sulfur (Fe-S) centers, to quinones in the photosynthetic chain and possibly in a chloroplast respiratory chain. The immediate electron acceptor for the enzyme in this species is believed to be plastoquinone. Couples the redox reaction to proton translocation, and thus conserves the redox energy in a proton gradient. The chain is NAD(P)H-quinone oxidoreductase subunit 3, chloroplastic from Panax ginseng (Korean ginseng).